The primary structure comprises 623 residues: Dictomallein-5 (623 aa).

Positions Met1–Ser21 are cleaved as a signal peptide. Residues Pro174–Tyr435 form the Peptidase M66 domain. Residue His327 participates in Zn(2+) binding. Glu328 is a catalytic residue. Residues His331 and His337 each coordinate Zn(2+).

It belongs to the dictomallein family. Requires Zn(2+) as cofactor.

Its subcellular location is the secreted. This is Dictomallein-5 (dtmlE) from Dictyostelium discoideum (Social amoeba).